The sequence spans 157 residues: MVSVQTIATIVVKTFKIVLNIIILVLYRTGYNGEFLGVGGTWNLNEEKNPDAEIVASGVIVGYLIYTLVQIVTFLFGTTEHKRALSEIVMNFVGVFLWIAVGAVALHYWGGYQGEHQFQFVFAEKQVGLAVGALCVINGAIYLLDTALSVIHFTKEM.

Residues 2–6 (VSVQT) lie on the Cytoplasmic side of the membrane. The helical transmembrane segment at 7–27 (IATIVVKTFKIVLNIIILVLY) threads the bilayer. The Extracellular portion of the chain corresponds to 28–53 (RTGYNGEFLGVGGTWNLNEEKNPDAE). The chain crosses the membrane as a helical span at residues 54–74 (IVASGVIVGYLIYTLVQIVTF). Residues 75–87 (LFGTTEHKRALSE) are Cytoplasmic-facing. The chain crosses the membrane as a helical span at residues 88-108 (IVMNFVGVFLWIAVGAVALHY). Over 109 to 130 (WGGYQGEHQFQFVFAEKQVGLA) the chain is Extracellular. The chain crosses the membrane as a helical span at residues 131–151 (VGALCVINGAIYLLDTALSVI). Topologically, residues 152–157 (HFTKEM) are cytoplasmic.

As to expression, expressed in midgut epithelium (at protein level).

It is found in the apicolateral cell membrane. The protein localises to the cell junction. It localises to the septate junction. In terms of biological role, required for assembly of smooth septate junctions (sSJs). May be important for barrier function of the midgut epithelium. This chain is Protein snakeskin, found in Bombyx mori (Silk moth).